We begin with the raw amino-acid sequence, 282 residues long: Undecaprenyl-diphosphatase (282 aa).

Helical transmembrane passes span 7–29 (VLFA…HVVI), 45–65 (FLPF…LYFW), 89–109 (GLLL…FALK), 115–135 (LFAS…VLII), 153–173 (LTLR…LPGL), 196–216 (FAFL…VPHL), 229–249 (TALL…AFLM), and 258–278 (WALG…LILI).

It belongs to the UppP family.

The protein localises to the cell inner membrane. The catalysed reaction is di-trans,octa-cis-undecaprenyl diphosphate + H2O = di-trans,octa-cis-undecaprenyl phosphate + phosphate + H(+). In terms of biological role, catalyzes the dephosphorylation of undecaprenyl diphosphate (UPP). Confers resistance to bacitracin. The protein is Undecaprenyl-diphosphatase of Acidiphilium cryptum (strain JF-5).